A 340-amino-acid polypeptide reads, in one-letter code: Glycerol-3-phosphate dehydrogenase [NAD(P)+] (340 aa).

NADPH is bound by residues S14, F15, R35, and K108. Sn-glycerol 3-phosphate-binding residues include K108 and G136. Position 140 (A140) interacts with NADPH. Residues K191, D244, S254, R255, and N256 each contribute to the sn-glycerol 3-phosphate site. Catalysis depends on K191, which acts as the Proton acceptor. R255 is an NADPH binding site. Position 281 (E281) interacts with NADPH.

The protein belongs to the NAD-dependent glycerol-3-phosphate dehydrogenase family.

It is found in the cytoplasm. It carries out the reaction sn-glycerol 3-phosphate + NAD(+) = dihydroxyacetone phosphate + NADH + H(+). It catalyses the reaction sn-glycerol 3-phosphate + NADP(+) = dihydroxyacetone phosphate + NADPH + H(+). Its pathway is membrane lipid metabolism; glycerophospholipid metabolism. In terms of biological role, catalyzes the reduction of the glycolytic intermediate dihydroxyacetone phosphate (DHAP) to sn-glycerol 3-phosphate (G3P), the key precursor for phospholipid synthesis. The sequence is that of Glycerol-3-phosphate dehydrogenase [NAD(P)+] from Pseudomonas aeruginosa (strain ATCC 15692 / DSM 22644 / CIP 104116 / JCM 14847 / LMG 12228 / 1C / PRS 101 / PAO1).